A 68-amino-acid chain; its full sequence is uncharacterized protein (68 aa).

It to bacterial proteins yidD.

This is an uncharacterized protein from Haemophilus influenzae (Bacteriophage HP1).